A 116-amino-acid chain; its full sequence is Aspartate 1-decarboxylase (116 aa).

Catalysis depends on Ser-25, which acts as the Schiff-base intermediate with substrate; via pyruvic acid. Position 25 is a pyruvic acid (Ser) (Ser-25). Thr-57 is a substrate binding site. Residue Tyr-58 is the Proton donor of the active site. Substrate is bound at residue 73–75 (GAA).

Belongs to the PanD family. Heterooctamer of four alpha and four beta subunits. Requires pyruvate as cofactor. In terms of processing, is synthesized initially as an inactive proenzyme, which is activated by self-cleavage at a specific serine bond to produce a beta-subunit with a hydroxyl group at its C-terminus and an alpha-subunit with a pyruvoyl group at its N-terminus.

The protein resides in the cytoplasm. The catalysed reaction is L-aspartate + H(+) = beta-alanine + CO2. It functions in the pathway cofactor biosynthesis; (R)-pantothenate biosynthesis; beta-alanine from L-aspartate: step 1/1. Its function is as follows. Catalyzes the pyruvoyl-dependent decarboxylation of aspartate to produce beta-alanine. This Leptospira borgpetersenii serovar Hardjo-bovis (strain JB197) protein is Aspartate 1-decarboxylase.